Consider the following 601-residue polypeptide: Elongation factor 4 (601 aa).

The region spanning 4-186 (SFIRNFAIIA…SIVHLVPPPK (183 aa)) is the tr-type G domain. Residues 16–21 (DHGKST) and 133–136 (NKID) each bind GTP.

This sequence belongs to the TRAFAC class translation factor GTPase superfamily. Classic translation factor GTPase family. LepA subfamily.

The protein localises to the cell inner membrane. It catalyses the reaction GTP + H2O = GDP + phosphate + H(+). In terms of biological role, required for accurate and efficient protein synthesis under certain stress conditions. May act as a fidelity factor of the translation reaction, by catalyzing a one-codon backward translocation of tRNAs on improperly translocated ribosomes. Back-translocation proceeds from a post-translocation (POST) complex to a pre-translocation (PRE) complex, thus giving elongation factor G a second chance to translocate the tRNAs correctly. Binds to ribosomes in a GTP-dependent manner. This Koribacter versatilis (strain Ellin345) protein is Elongation factor 4.